We begin with the raw amino-acid sequence, 425 residues long: UPF0761 membrane protein XC_3370 (425 aa).

Transmembrane regions (helical) follow at residues 48–68 (VFALVPLAIVVFGVLSAFPAF), 105–125 (FTVAGMVALVASLLITLHSIE), 154–174 (GTMLAAASMAMAAYVFALPLF), 182–202 (LAEFAWRLAPMAVEFVCIVLI), 216–236 (ALPGALLAVILMEIVKWGFGF), and 250–270 (ALSALPILLLWIYLSWVSVLL).

The protein belongs to the UPF0761 family.

The protein resides in the cell inner membrane. The protein is UPF0761 membrane protein XC_3370 of Xanthomonas campestris pv. campestris (strain 8004).